The primary structure comprises 311 residues: MKAKGRILLLTSCLFLLLLLLAKIHLRNHQEEELPLSDWFDPRRRLDVITTTDWLAPVIWEGTFDRKVLEKYYHKQNITMGLTVFAVSSFNGQYLDPFLQSASKFFMPGYRVIFYIMVDKSLKLPEMGHNPLQSFQVLVVSQERQWSDFDLMRMTVLSKHIREHIRFEVDFLFVMSVNMVFQNVFGVETLSTSVAQLHAWWYFRKTTHLPYERRPTSAAYIPFGLGDFYYAGAIIGGVPFQVLDFTHQYLKSVILDIENGVNSTYEKYLNKYFFLNKPTKLLSPEYSWDQTFNIPQQVHYVKVAHYPTDDL.

At 1–5 (MKAKG) the chain is on the cytoplasmic side. Residues 6 to 26 (RILLLTSCLFLLLLLLAKIHL) traverse the membrane as a helical; Signal-anchor for type II membrane protein segment. Residues 27–311 (RNHQEEELPL…KVAHYPTDDL (285 aa)) are Lumenal-facing. N-linked (GlcNAc...) asparagine glycosylation occurs at N77. Substrate contacts are provided by residues 85 to 90 (FAVSSF), 176 to 178 (SVN), and 198 to 201 (HAWW). E266 acts as the Nucleophile in catalysis.

Belongs to the glycosyltransferase 6 family. Mn(2+) is required as a cofactor.

The protein localises to the membrane. In Rattus norvegicus (Rat), this protein is Glycosyltransferase 6 domain-containing protein 1 (Glt6d1).